The following is a 114-amino-acid chain: MSASESAPSAPPVKGMRKNGKNWHDSKKPFRPTAGMTSYAKRLEARKHQEAVKEHERELKEEKEAERQAHIQRIKDRRAAKEEKERYDKMAEKMHRKRVERLKRREKRNKLLNS.

The segment at 1–96 is disordered; sequence MSASESAPSA…YDKMAEKMHR (96 aa). A coiled-coil region spans residues 40-101; sequence AKRLEARKHQ…EKMHRKRVER (62 aa). Residues 41–93 are compositionally biased toward basic and acidic residues; that stretch reads KRLEARKHQEAVKEHERELKEEKEAERQAHIQRIKDRRAAKEEKERYDKMAEK.

This sequence belongs to the CGR1 family.

The protein localises to the nucleus. It localises to the nucleolus. Its function is as follows. Involved in nucleolar integrity and required for processing of the pre-rRNA for the 60S ribosome subunit. The protein is rRNA-processing protein cgrA (cgrA) of Aspergillus terreus (strain NIH 2624 / FGSC A1156).